The following is a 116-amino-acid chain: Calcium-regulated OB-fold protein CarO (116 aa).

Residues 1-21 (MKLRHLPLIAAIGLFSTVTLA) form the signal peptide.

The protein resides in the periplasm. Functionally, plays a role in intracellular Ca(2+) homeostasis. Involved in cell protection against oxidative stress in strain 25W. In Pseudomonas aeruginosa (strain ATCC 15692 / DSM 22644 / CIP 104116 / JCM 14847 / LMG 12228 / 1C / PRS 101 / PAO1), this protein is Calcium-regulated OB-fold protein CarO.